We begin with the raw amino-acid sequence, 116 residues long: Class I hydrophobin 1 (116 aa).

A signal peptide spans 1–19 (MLFKQAILVATTLTTLAVA). Cystine bridges form between C35–C95, C42–C89, C43–C76, and C96–C109. N-linked (GlcNAc...) asparagine glycans are attached at residues N44 and N100.

Belongs to the fungal hydrophobin family. In terms of assembly, self-assembles to form functional amyloid fibrils called rodlets. Self-assembly into fibrillar rodlets occurs spontaneously at hydrophobic:hydrophilic interfaces and the rodlets further associate laterally to form amphipathic monolayers.

The protein localises to the secreted. The protein resides in the cell wall. Aerial growth, conidiation, and dispersal of filamentous fungi in the environment rely upon a capability of their secreting small amphipathic proteins called hydrophobins (HPBs) with low sequence identity. Class I can self-assemble into an outermost layer of rodlet bundles on aerial cell surfaces, conferring cellular hydrophobicity that supports fungal growth, development and dispersal; whereas Class II form highly ordered films at water-air interfaces through intermolecular interactions but contribute nothing to the rodlet structure. In Pleurotus ostreatus (strain PC15) (Oyster mushroom), this protein is Class I hydrophobin 1.